We begin with the raw amino-acid sequence, 344 residues long: Phenylalanine--tRNA ligase alpha subunit (344 aa).

Glutamate 259 contacts Mg(2+).

This sequence belongs to the class-II aminoacyl-tRNA synthetase family. Phe-tRNA synthetase alpha subunit type 1 subfamily. As to quaternary structure, tetramer of two alpha and two beta subunits. The cofactor is Mg(2+).

It is found in the cytoplasm. The enzyme catalyses tRNA(Phe) + L-phenylalanine + ATP = L-phenylalanyl-tRNA(Phe) + AMP + diphosphate + H(+). In Petrotoga mobilis (strain DSM 10674 / SJ95), this protein is Phenylalanine--tRNA ligase alpha subunit.